A 119-amino-acid chain; its full sequence is Large ribosomal subunit protein bL20 (119 aa).

The protein belongs to the bacterial ribosomal protein bL20 family. Part of the 50S ribosomal subunit.

In terms of biological role, binds directly to 23S ribosomal RNA and is necessary for the in vitro assembly process of the 50S ribosomal subunit. It is not involved in the protein synthesizing functions of that subunit. The sequence is that of Large ribosomal subunit protein bL20 (rplT) from Bacillus subtilis (strain 168).